Consider the following 473-residue polypeptide: Major myo-inositol transporter IolT (473 aa).

12 helical membrane-spanning segments follow: residues 14–34 (IILVSTFGGLLFGYDTGVLNG), 49–69 (AFTEGLVTSSLLFGAALGAVF), 83–103 (ILFLAVIFFISTIGCTFAPNV), 111–131 (FVLGIAVGGASVTVPAYLAEM), 146–166 (LMIVSGQLLAFVFNAILGTTM), 172–192 (VWRFMLVIASLPALFLFFGMI), 256–276 (IVFIGLGIAIVQQITGVNSIM), 295–315 (IGNIANGVISVLATFVGIWLL), 325–345 (MTGLIGTTTALLLIGIFSLVL), 350–370 (ALPYVVLSLTVTFLAFQQGAI), 389–409 (LGMGVTVFCLWMVNFAVSFTF), and 411–431 (ILLAAIGLSTTFFIFVGLGIC).

The protein belongs to the major facilitator superfamily. Sugar transporter (TC 2.A.1.1) family.

It localises to the cell membrane. It participates in polyol metabolism; myo-inositol degradation into acetyl-CoA. Its function is as follows. Major myo-inositol uptake transporter. In Bacillus subtilis (strain 168), this protein is Major myo-inositol transporter IolT (iolT).